Consider the following 324-residue polypeptide: tRNA U34 carboxymethyltransferase (324 aa).

Carboxy-S-adenosyl-L-methionine-binding positions include Lys92, Trp106, Lys111, Gly131, 181-182 (LE), Met197, Tyr201, and Arg316.

It belongs to the class I-like SAM-binding methyltransferase superfamily. CmoB family. In terms of assembly, homotetramer.

The enzyme catalyses carboxy-S-adenosyl-L-methionine + 5-hydroxyuridine(34) in tRNA = 5-carboxymethoxyuridine(34) in tRNA + S-adenosyl-L-homocysteine + H(+). Functionally, catalyzes carboxymethyl transfer from carboxy-S-adenosyl-L-methionine (Cx-SAM) to 5-hydroxyuridine (ho5U) to form 5-carboxymethoxyuridine (cmo5U) at position 34 in tRNAs. The sequence is that of tRNA U34 carboxymethyltransferase from Syntrophotalea carbinolica (strain DSM 2380 / NBRC 103641 / GraBd1) (Pelobacter carbinolicus).